The chain runs to 337 residues: Mediator of RNA polymerase II transcription subunit 19 (337 aa).

3 disordered regions span residues 1-38 (MMSNYGNMMDSPKSSPHGGGRSPVVARQDSSGTLKTTI), 155-234 (YVTP…LPGG), and 297-337 (QMSS…MSQF). Positions 28-38 (QDSSGTLKTTI) are enriched in polar residues. Basic residues-rich tracts occupy residues 159–171 (ARKHKNKHKKQKH) and 208–221 (RKKRKKEKKRKKKN). Residues 189–223 (LETYEKKHKKQKRHEDDKERKKRKKEKKRKKKNQS) adopt a coiled-coil conformation. Positions 297 to 309 (QMSSGGLLGSVLG) are enriched in low complexity. The segment covering 310-330 (TSGGPGGGGGGGGGGGGGVGG) has biased composition (gly residues).

The protein belongs to the Mediator complex subunit 19 family. As to quaternary structure, component of the Mediator complex.

Its subcellular location is the nucleus. Functionally, component of the Mediator complex, a coactivator involved in the regulated transcription of nearly all RNA polymerase II-dependent genes. Mediator functions as a bridge to convey information from gene-specific regulatory proteins to the basal RNA polymerase II transcription machinery. Mediator is recruited to promoters by direct interactions with regulatory proteins and serves as a scaffold for the assembly of a functional preinitiation complex with RNA polymerase II and the general transcription factors. In Drosophila melanogaster (Fruit fly), this protein is Mediator of RNA polymerase II transcription subunit 19 (MED19).